The sequence spans 2494 residues: Nuclear receptor corepressor 1 (2494 aa).

A compositionally biased stretch (polar residues) spans 1–33 (MSSSGYPPNQGAFSTEQGRYSSHPVQYTFPSSR). Disordered regions lie at residues 1–38 (MSSS…QQEF), 53–106 (LLQQ…PRLD), 134–170 (SEVK…KLSK), and 198–222 (QQQL…PVEQ). Residues 71 to 82 (PVSDRPQDRRQG) show a composition bias toward basic and acidic residues. Residues 83–92 (YEQQYHSVTQ) are compositionally biased toward polar residues. Basic and acidic residues-rich tracts occupy residues 93-106 (NEHE…PRLD), 134-148 (SEVK…KHET), and 204-213 (EAAKPPEPEK). The tract at residues 154–304 (SGQPGEEQEA…REQNICQRYD (151 aa)) is interaction with tbl1xr1. Residues 168–208 (LSKEELIQSMDRVDREIAKVEQQILKLKKKQQQLEEEAAKP) adopt a coiled-coil conformation. One can recognise an SANT 1 domain in the interval 427 to 478 (QFMNVWTDHEKEIFKEKFVQHPKNFGLIASYLERKTVSDCVLYYYLTKKNEN). Disordered stretches follow at residues 488 to 638 (PKRR…VEHG), 671 to 913 (NLLQ…LDSK), 981 to 1007 (RQRQ…PNMD), 1081 to 1124 (GARL…GTPG), 1413 to 1434 (IHEI…ESSR), 1488 to 1585 (MGER…TQRE), 1745 to 1845 (LAFP…QESI), and 1912 to 1987 (EVVK…AHTK). 2 stretches are compositionally biased toward basic and acidic residues: residues 502–525 (AQEE…KEEE) and 535–548 (KEEL…RTDA). The stretch at 502-549 (AQEEKEIEKVEEEKAERNDKKEEERREEEEKEEKEELRDGTKDRTDAI) forms a coiled coil. The segment covering 582–616 (ASEAAAAANAASTATTAPATTTSTTATTTTAALVP) has biased composition (low complexity). Positions 617 to 629 (VAPPPEEPTPPPT) are enriched in pro residues. One can recognise an SANT 2 domain in the interval 622-668 (EEPTPPPTQEQSLVEHGRNWGAIAKMVGSKSESQCKNFYFNYKRRHN). Residues 692-702 (QCESVASTVSA) show a composition bias toward polar residues. A coiled-coil region spans residues 698–726 (STVSAQEDEENEASNEEENAEDSEGAENS). Over residues 703–722 (QEDEENEASNEEENAEDSEG) the composition is skewed to acidic residues. The segment covering 723–741 (AENSSDTESAPSPSPAEAA) has biased composition (low complexity). Positions 766–779 (ASKSVSDSSPTPTV) are enriched in polar residues. Positions 829 to 864 (AEPDEVESKPSESAEVKIEEDTKDQDMERLMDRAEA) are enriched in basic and acidic residues. Polar residues-rich tracts occupy residues 881–892 (ESQSDNDSSATC), 993–1004 (MSASPGNMSKSP), and 1104–1124 (ATSS…GTPG). Over residues 1488–1504 (MGERSKYEDTKSSEAIR) the composition is skewed to basic and acidic residues. Residues 1508–1519 (TSVVSSGPSVLR) are compositionally biased toward polar residues. The segment covering 1548 to 1561 (PSPMSRSSPMARSA) has biased composition (low complexity). A coiled-coil region spans residues 1771–1810 (VSAERERERERDRERDREREKEQRERERDRERERERLAAA). The span at 1773-1807 (AERERERERDRERDREREKEQRERERDRERERERL) shows a compositional bias: basic and acidic residues. A compositionally biased stretch (polar residues) spans 1835–1845 (PSPSVRAQESI). A compositionally biased stretch (basic and acidic residues) spans 1914–1935 (VKPKEMKHDPARSEESLSRRNV). Low complexity predominate over residues 1953–1972 (QSPYTSSSFSGSKSQGQPSP). Positions 1978–1987 (AGKEKTAHTK) are enriched in basic and acidic residues. The CORNR box 1 signature appears at 2008-2012 (IDVII). Residues 2018-2105 (SDKDGRDRNS…PSPQQTIPGH (88 aa)) form a disordered region. The span at 2027–2036 (SQSSDSSSSH) shows a compositional bias: low complexity. Basic and acidic residues predominate over residues 2039 to 2048 (HRYDAPRDTI). The segment covering 2088–2102 (RYRQQQESPSPQQTI) has biased composition (polar residues). A CORNR box 2 motif is present at residues 2119-2123 (ICQII). Residues 2135 to 2177 (QALQQPPASTFQSTNPSSTPVRTKASSRFSPESQVQPVHNQRP) show a composition bias toward polar residues. The segment at 2135–2216 (QALQQPPAST…YEPISPPQAP (82 aa)) is disordered. Residues 2186 to 2205 (VLDRPRGRPGKSPDRGHISE) are compositionally biased toward basic and acidic residues. The CORNR box 3 signature appears at 2322-2326 (LEDII). Disordered regions lie at residues 2346–2413 (GVAQ…SVHS) and 2446–2494 (MLNS…DSDE). Residues 2376–2390 (HKQKLISKYGSRKTK) show a composition bias toward basic residues. Composition is skewed to polar residues over residues 2446–2472 (MLNS…QQSR) and 2485–2494 (QYETLSDSDE).

This sequence belongs to the N-CoR nuclear receptor corepressors family. In terms of assembly, forms a large corepressor complex that contains sin3a/b, histone deacetylases hdac1 and hdac2, rbbp4 and possibly rbbp7. Interacts with the thyroid receptor (TR, composed of rxra and thrb) and the retinoid acid receptor (RAR, composed of rxra and rara) in the absence of ligand. Interacts with tbl1xr1. Interacts with zbtb33/kaiso.

The protein resides in the nucleus. Its function is as follows. Mediates transcriptional repression by certain nuclear receptors. Participates in complexes which promote histone deacetylation and the formation of repressive chromatin structures which may impede access by the basal transcription machinery. In association with hdac3, may play a role in the regulation of the circadian clock. This Xenopus tropicalis (Western clawed frog) protein is Nuclear receptor corepressor 1 (ncor1).